Reading from the N-terminus, the 217-residue chain is Insulin-like growth factor 2.S (217 aa).

A signal peptide spans 1–56 (MEQLSCKHRSSSVEAEAQLCRQTESRSTQLPRMSVMRHLFLLSITFLVYTLDSAKA). Positions 57-83 (YRATETLCGGELVDTLQFVCGDRGFYF) are b. 3 disulfides stabilise this stretch: Cys64/Cys103, Cys76/Cys116, and Cys102/Cys107. The interval 84–96 (STNNGRSNRRPNR) is c. Residues 97–117 (GIVDVCCFKSCDLELLETYCA) are a. Residues 118 to 123 (KPTKNE) form a d region. A propeptide spans 124 to 217 (RDVSTAPATA…LQQASEPSHN (94 aa)) (e peptide).

The protein belongs to the insulin family.

It localises to the secreted. In terms of biological role, the insulin-like growth factors, isolated from plasma, are structurally and functionally related to insulin but have a much higher growth-promoting activity. Promotes anterior neural development. Acts as a ligand for integrin which is required for IGF2 signaling. In Xenopus laevis (African clawed frog), this protein is Insulin-like growth factor 2.S.